Reading from the N-terminus, the 520-residue chain is GMP synthase [glutamine-hydrolyzing] (520 aa).

One can recognise a Glutamine amidotransferase type-1 domain in the interval lysine 12 to aspartate 205. Catalysis depends on cysteine 89, which acts as the Nucleophile. Catalysis depends on residues histidine 179 and glutamate 181. In terms of domain architecture, GMPS ATP-PPase spans tryptophan 206–arginine 395. Serine 233–serine 239 lines the ATP pocket.

In terms of assembly, homodimer.

The catalysed reaction is XMP + L-glutamine + ATP + H2O = GMP + L-glutamate + AMP + diphosphate + 2 H(+). It functions in the pathway purine metabolism; GMP biosynthesis; GMP from XMP (L-Gln route): step 1/1. Catalyzes the synthesis of GMP from XMP. This Streptococcus pyogenes serotype M1 protein is GMP synthase [glutamine-hydrolyzing].